The sequence spans 635 residues: Interferon-induced GTP-binding protein Mx1 (635 aa).

One can recognise a Dynamin-type G domain in the interval 31–309; it reads DLALPAIAVI…LVHHIELSLP (279 aa). The segment at 41–48 is G1 motif; sequence GDQSSGKS. A GTP-binding site is contributed by 41-48; the sequence is GDQSSGKS. The segment at 66–68 is G2 motif; that stretch reads VTR. Residues 147–150 form a G3 motif region; that stretch reads DLPG. GTP-binding positions include 147-151 and 216-219; these read DLPGI and TKPD. The segment at 216 to 219 is G4 motif; it reads TKPD. The G5 motif stretch occupies residues 248 to 251; that stretch reads RCRG. The region spanning 549 to 635 is the GED domain; that stretch reads LEELMRHLKS…MEARNYLVKF (87 aa).

The protein belongs to the TRAFAC class dynamin-like GTPase superfamily. Dynamin/Fzo/YdjA family.

The protein resides in the cytoplasm. The sequence is that of Interferon-induced GTP-binding protein Mx1 (mx1) from Ictalurus punctatus (Channel catfish).